Reading from the N-terminus, the 550-residue chain is Dihydroxy-acid dehydratase (550 aa).

Residue Asp-78 coordinates Mg(2+). Cys-119 contacts [2Fe-2S] cluster. Mg(2+)-binding residues include Asp-120 and Lys-121. Position 121 is an N6-carboxylysine (Lys-121). Cys-191 provides a ligand contact to [2Fe-2S] cluster. Glu-440 provides a ligand contact to Mg(2+). Ser-466 (proton acceptor) is an active-site residue.

It belongs to the IlvD/Edd family. As to quaternary structure, homodimer. Requires [2Fe-2S] cluster as cofactor. It depends on Mg(2+) as a cofactor.

It carries out the reaction (2R)-2,3-dihydroxy-3-methylbutanoate = 3-methyl-2-oxobutanoate + H2O. It catalyses the reaction (2R,3R)-2,3-dihydroxy-3-methylpentanoate = (S)-3-methyl-2-oxopentanoate + H2O. The protein operates within amino-acid biosynthesis; L-isoleucine biosynthesis; L-isoleucine from 2-oxobutanoate: step 3/4. It participates in amino-acid biosynthesis; L-valine biosynthesis; L-valine from pyruvate: step 3/4. Its function is as follows. Functions in the biosynthesis of branched-chain amino acids. Catalyzes the dehydration of (2R,3R)-2,3-dihydroxy-3-methylpentanoate (2,3-dihydroxy-3-methylvalerate) into 2-oxo-3-methylpentanoate (2-oxo-3-methylvalerate) and of (2R)-2,3-dihydroxy-3-methylbutanoate (2,3-dihydroxyisovalerate) into 2-oxo-3-methylbutanoate (2-oxoisovalerate), the penultimate precursor to L-isoleucine and L-valine, respectively. This is Dihydroxy-acid dehydratase from Methanococcus maripaludis (strain C7 / ATCC BAA-1331).